The chain runs to 488 residues: Inositol 1,3,4-trisphosphate 5/6-kinase 4 (488 aa).

Residues K208 and K224 each contribute to the 1D-myo-inositol 1,3,4-trisphosphate site. The ATP-grasp domain occupies 246–488 (NACAIVDPIR…RFDQHVQEKH (243 aa)). ATP-binding residues include R263 and K315. 1D-myo-inositol 1,3,4-trisphosphate-binding residues include H326 and K360. ATP is bound by residues 349 to 360 (QEYVDHSSRIFK), S375, and S398. D439, D453, and N455 together coordinate Mg(2+). 1D-myo-inositol 1,3,4-trisphosphate-binding residues include N455 and S459.

It belongs to the ITPK1 family. As to quaternary structure, monomer. Mg(2+) is required as a cofactor. Expressed in roots, leaf vasculature, cauline leaves, flower buds and siliques.

It catalyses the reaction 1D-myo-inositol 1,3,4-trisphosphate + ATP = 1D-myo-inositol 1,3,4,5-tetrakisphosphate + ADP + H(+). It carries out the reaction 1D-myo-inositol 1,3,4-trisphosphate + ATP = 1D-myo-inositol 1,3,4,6-tetrakisphosphate + ADP + H(+). In terms of biological role, kinase that can phosphorylate the inositol polyphosphate Ins(1,3,4)P3 to form InsP4. Also phosphorylates a racemic mixture of Ins(1,4,6)P3 and Ins(3,4,6)P3 to form InsP4. Does not display inositol 3,4,5,6-tetrakisphosphate 1-kinase activity, but possesses inositol 1,4,5,6-tetrakisphosphate and inositol 1,3,4,5-tetrakisphosphate isomerase activity. Ins(1,3,4,6)P4 is an essential molecule in the hexakisphosphate (InsP6) pathway. This is Inositol 1,3,4-trisphosphate 5/6-kinase 4 (ITPK4) from Arabidopsis thaliana (Mouse-ear cress).